Reading from the N-terminus, the 263-residue chain is Lens fiber major intrinsic protein (263 aa).

Over 1–9 (MWELRSASF) the chain is Cytoplasmic. The helical transmembrane segment at 10–29 (WRAIFAEFFATLFYVFFGLG) threads the bilayer. Residues 30–41 (SSLRWAPGPLHV) lie on the Extracellular side of the membrane. A helical membrane pass occupies residues 42–59 (LQVAMAFGLALATLVQSV). Residues 60 to 61 (GH) are Cytoplasmic-facing. The segment at residues 62-77 (ISGAHVNPAVTFAFLV) is an intramembrane region (discontinuously helical). Positions 68-70 (NPA) match the NPA 1 motif. The Cytoplasmic segment spans residues 78–82 (GSQMS). The chain crosses the membrane as a helical span at residues 83–106 (LLRAFCYMAAQLLGAVAGAAVLYS). The Extracellular segment spans residues 107-127 (VTPPAVRGNLALNTLHPAVSV). A helical transmembrane segment spans residues 128–148 (GQATTVEIFLTLQFVLCIFAT). Residues 149–156 (YDERRNGQ) are Cytoplasmic-facing. Residues 157–175 (LGSVALAVGFSLALGHLFG) form a helical membrane-spanning segment. The Extracellular portion of the chain corresponds to 176–178 (MYY). The discontinuously helical intramembrane region spans 179–193 (TGAGMNPARSFAPAI). The short motif at 184 to 186 (NPA) is the NPA 2 element. Topologically, residues 194 to 200 (LTGNFTN) are extracellular. The chain crosses the membrane as a helical span at residues 201 to 222 (HWVYWVGPIIGGGLGSLLYDFL). At 223 to 263 (LFPRLKSISERLSVLKGAKPDVSNGQPEVTGEPVELNTQAL) the chain is on the cytoplasmic side. An interaction with CALM region spans residues 227–237 (LKSISERLSVL). Phosphoserine is present on residues Ser-235 and Ser-245. Asn-246 and Asn-259 each carry deamidated asparagine; by deterioration.

Belongs to the MIP/aquaporin (TC 1.A.8) family. As to quaternary structure, homotetramer; each monomer provides an independent water pore. Two homotetramers on opposing membranes can dimerize, forming a cell-cell junction. Interacts with CALM; the calcium-calmodulin/CALM complex interacts with the cytoplasmic domains of two aquaporins, leading to channel closure. Interacts with BFSP1 (via C-terminus); prevents calcium-dependent inhibition of the water channel activity. In terms of processing, subject to partial proteolytic cleavage in the eye lens core. Partial proteolysis promotes interactions between tetramers from adjoining membranes. Post-translationally, fatty acylated at Met-1 and Lys-238. The acyl modifications, in decreasing order of ion abundance, are: oleoyl (C18:1) &gt; palmitoyl (C16:0) &gt; stearoyl (C18:0) &gt; eicosenoyl (C20:1) &gt; dihomo-gamma-linolenoyl (C20:3) &gt; palmitoleoyl (C16:1) &gt; eicosadienoyl (C20:2). As to expression, expressed in the cortex and nucleus of the retina lens (at protein level). Major component of lens fiber gap junctions.

The protein localises to the cell membrane. Its subcellular location is the cell junction. It carries out the reaction H2O(in) = H2O(out). With respect to regulation, the water channel activity is inhibited by calcium through calmodulin/CALM. Functionally, aquaporins form homotetrameric transmembrane channels, with each monomer independently mediating water transport across the plasma membrane along its osmotic gradient. Specifically expressed in lens fiber cells, this aquaporin is crucial for maintaining lens water homeostasis and transparency. Beyond water permeability, it also acts as a cell-to-cell adhesion molecule, forming thin junctions between lens fiber cells that are essential for maintaining the ordered structure and transparency of the lens. In Homo sapiens (Human), this protein is Lens fiber major intrinsic protein.